The primary structure comprises 147 residues: Ribonuclease H (147 aa).

The 142-residue stretch at 1 to 142 (MKKVSIYTDG…CDKLATDEIK (142 aa)) folds into the RNase H type-1 domain. Residues Asp9, Glu47, Asp69, and Asp134 each contribute to the Mg(2+) site.

Belongs to the RNase H family. Monomer. It depends on Mg(2+) as a cofactor.

The protein resides in the cytoplasm. The enzyme catalyses Endonucleolytic cleavage to 5'-phosphomonoester.. Functionally, endonuclease that specifically degrades the RNA of RNA-DNA hybrids. The chain is Ribonuclease H from Acetivibrio thermocellus (strain ATCC 27405 / DSM 1237 / JCM 9322 / NBRC 103400 / NCIMB 10682 / NRRL B-4536 / VPI 7372) (Clostridium thermocellum).